Reading from the N-terminus, the 189-residue chain is Probable nicotinate-nucleotide adenylyltransferase (189 aa).

Belongs to the NadD family.

The enzyme catalyses nicotinate beta-D-ribonucleotide + ATP + H(+) = deamido-NAD(+) + diphosphate. It functions in the pathway cofactor biosynthesis; NAD(+) biosynthesis; deamido-NAD(+) from nicotinate D-ribonucleotide: step 1/1. Functionally, catalyzes the reversible adenylation of nicotinate mononucleotide (NaMN) to nicotinic acid adenine dinucleotide (NaAD). This is Probable nicotinate-nucleotide adenylyltransferase from Bacillus cereus (strain B4264).